Consider the following 335-residue polypeptide: Biotin synthase (335 aa).

In terms of domain architecture, Radical SAM core spans 46-274 (YKVQLASLFS…KSKIRLSAGR (229 aa)). Cys-61, Cys-65, and Cys-68 together coordinate [4Fe-4S] cluster. Residues Cys-105, Cys-137, Cys-197, and Arg-269 each contribute to the [2Fe-2S] cluster site.

It belongs to the radical SAM superfamily. Biotin synthase family. As to quaternary structure, homodimer. It depends on [4Fe-4S] cluster as a cofactor. [2Fe-2S] cluster serves as cofactor.

The enzyme catalyses (4R,5S)-dethiobiotin + (sulfur carrier)-SH + 2 reduced [2Fe-2S]-[ferredoxin] + 2 S-adenosyl-L-methionine = (sulfur carrier)-H + biotin + 2 5'-deoxyadenosine + 2 L-methionine + 2 oxidized [2Fe-2S]-[ferredoxin]. It functions in the pathway cofactor biosynthesis; biotin biosynthesis; biotin from 7,8-diaminononanoate: step 2/2. In terms of biological role, catalyzes the conversion of dethiobiotin (DTB) to biotin by the insertion of a sulfur atom into dethiobiotin via a radical-based mechanism. In Prochlorococcus marinus (strain MIT 9515), this protein is Biotin synthase.